The sequence spans 247 residues: Adenosylcobinamide-GDP ribazoletransferase (247 aa).

5 consecutive transmembrane segments (helical) span residues 34 to 54 (IITFPLIGLLLGAISGLVFMV), 59 to 79 (CGAPLAALFSVLVLVLMTGGF), 113 to 133 (GGLALIFVVLAKILVLSELAL), 138 to 158 (ILASLAAACAISRGTAALLMY), and 194 to 214 (VLLPGMHGVAAMVVTMVAIFI).

The protein belongs to the CobS family. Mg(2+) is required as a cofactor.

It localises to the cell inner membrane. The enzyme catalyses alpha-ribazole + adenosylcob(III)inamide-GDP = adenosylcob(III)alamin + GMP + H(+). It catalyses the reaction alpha-ribazole 5'-phosphate + adenosylcob(III)inamide-GDP = adenosylcob(III)alamin 5'-phosphate + GMP + H(+). It participates in cofactor biosynthesis; adenosylcobalamin biosynthesis; adenosylcobalamin from cob(II)yrinate a,c-diamide: step 7/7. In terms of biological role, joins adenosylcobinamide-GDP and alpha-ribazole to generate adenosylcobalamin (Ado-cobalamin). Also synthesizes adenosylcobalamin 5'-phosphate from adenosylcobinamide-GDP and alpha-ribazole 5'-phosphate. This chain is Adenosylcobinamide-GDP ribazoletransferase, found in Escherichia coli O45:K1 (strain S88 / ExPEC).